A 344-amino-acid chain; its full sequence is Protein pelota homolog (344 aa).

This sequence belongs to the eukaryotic release factor 1 family. Pelota subfamily. In terms of assembly, monomer. Requires a divalent metal cation as cofactor.

It is found in the cytoplasm. Its function is as follows. May function in recognizing stalled ribosomes, interact with stem-loop structures in stalled mRNA molecules, and effect endonucleolytic cleavage of the mRNA. May play a role in the release non-functional ribosomes and degradation of damaged mRNAs. Has endoribonuclease activity. The chain is Protein pelota homolog from Saccharolobus islandicus (strain M.14.25 / Kamchatka #1) (Sulfolobus islandicus).